The sequence spans 146 residues: Globin (146 aa).

Alanine 1 is subject to N-acetylalanine. The 146-residue stretch at 1–146 (ALTEPQKTAL…LLTMLIKAHS (146 aa)) folds into the Globin domain. Heme b is bound by residues histidine 65 and histidine 97.

Belongs to the globin family. In terms of assembly, homodimer.

The sequence is that of Globin from Buccinum undatum (Common whelk).